The primary structure comprises 592 residues: A-type ATP synthase subunit A (592 aa).

An ATP-binding site is contributed by 233–240 (GPFGSGKT).

Belongs to the ATPase alpha/beta chains family. As to quaternary structure, has multiple subunits with at least A(3), B(3), C, D, E, F, H, I and proteolipid K(x).

The protein localises to the cell membrane. It carries out the reaction ATP + H2O + 4 H(+)(in) = ADP + phosphate + 5 H(+)(out). In terms of biological role, component of the A-type ATP synthase that produces ATP from ADP in the presence of a proton gradient across the membrane. The A chain is the catalytic subunit. This is A-type ATP synthase subunit A from Saccharolobus islandicus (strain L.S.2.15 / Lassen #1) (Sulfolobus islandicus).